The chain runs to 48 residues: Protein PsbN (48 aa).

The chain crosses the membrane as a helical span at residues 12–34; sequence LLIAMVTITFGLTGYGLYTAFGP.

Belongs to the PsbN family.

It is found in the cellular thylakoid membrane. In terms of biological role, may play a role in photosystem I and II biogenesis. The chain is Protein PsbN from Prochlorococcus marinus (strain MIT 9313).